We begin with the raw amino-acid sequence, 185 residues long: Segregation and condensation protein B (185 aa).

The protein belongs to the ScpB family. As to quaternary structure, homodimer. Homodimerization may be required to stabilize the binding of ScpA to the Smc head domains. Component of a cohesin-like complex composed of ScpA, ScpB and the Smc homodimer, in which ScpA and ScpB bind to the head domain of Smc. The presence of the three proteins is required for the association of the complex with DNA.

The protein localises to the cytoplasm. In terms of biological role, participates in chromosomal partition during cell division. May act via the formation of a condensin-like complex containing Smc and ScpA that pull DNA away from mid-cell into both cell halves. The protein is Segregation and condensation protein B of Carboxydothermus hydrogenoformans (strain ATCC BAA-161 / DSM 6008 / Z-2901).